A 271-amino-acid polypeptide reads, in one-letter code: Interleukin-1 alpha (271 aa).

Residues 1–112 constitute a propeptide that is removed on maturation; sequence MAKVPDMFED…DSEEEIIKPR (112 aa). K82 bears the N6-acetyllysine mark. Residues K82 and K83 are each lipidated (N6-myristoyl lysine). The tract at residues 82 to 86 is nuclear localization signal (NLS); it reads KKRRL. S87 carries the phosphoserine modification. N-linked (GlcNAc...) asparagine glycans are attached at residues N102 and N141.

It belongs to the IL-1 family. Monomer. Interacts with TMED10; the interaction mediates the translocation from the cytoplasm into the ERGIC (endoplasmic reticulum-Golgi intermediate compartment) and thereby secretion. Interacts with IL1R1. Interacts with S100A13; this interaction is the first step in the export of IL1A, followed by direct translocation of this complex across the plasma membrane. Post-translationally, acetylated within its nuclear localization sequence, which impacts subcellular localization. Proteolytic processed by CAPN1 in a calcium-dependent manner. Cleavage from 31 kDa precursor to 18 kDa biologically active molecules. In terms of processing, phosphorylated. Phosphorylation greatly enhances susceptibility to digestion and promotes the conversion of pre-IL1A alpha to the biologically active IL1A.

It is found in the nucleus. Its subcellular location is the cytoplasm. The protein localises to the secreted. Cytokine constitutively present intracellularly in nearly all resting non-hematopoietic cells that plays an important role in inflammation and bridges the innate and adaptive immune systems. After binding to its receptor IL1R1 together with its accessory protein IL1RAP, forms the high affinity interleukin-1 receptor complex. Signaling involves the recruitment of adapter molecules such as MYD88, IRAK1 or IRAK4. In turn, mediates the activation of NF-kappa-B and the three MAPK pathways p38, p42/p44 and JNK pathways. Within the cell, acts as an alarmin and cell death results in its liberation in the extracellular space after disruption of the cell membrane to induce inflammation and alert the host to injury or damage. In addition to its role as a danger signal, which occurs when the cytokine is passively released by cell necrosis, directly senses DNA damage and acts as a signal for genotoxic stress without loss of cell integrity. The protein is Interleukin-1 alpha (IL1A) of Homo sapiens (Human).